The following is a 411-amino-acid chain: Serine--tRNA ligase (411 aa).

An L-serine-binding site is contributed by 226–228; sequence TSE. 257–259 contacts ATP; it reads RKE. Glutamate 280 is a binding site for L-serine. 344–347 lines the ATP pocket; the sequence is EISS. Serine 379 contacts L-serine.

The protein belongs to the class-II aminoacyl-tRNA synthetase family. Type-1 seryl-tRNA synthetase subfamily. As to quaternary structure, homodimer. The tRNA molecule binds across the dimer.

Its subcellular location is the cytoplasm. The catalysed reaction is tRNA(Ser) + L-serine + ATP = L-seryl-tRNA(Ser) + AMP + diphosphate + H(+). It catalyses the reaction tRNA(Sec) + L-serine + ATP = L-seryl-tRNA(Sec) + AMP + diphosphate + H(+). It functions in the pathway aminoacyl-tRNA biosynthesis; selenocysteinyl-tRNA(Sec) biosynthesis; L-seryl-tRNA(Sec) from L-serine and tRNA(Sec): step 1/1. Its function is as follows. Catalyzes the attachment of serine to tRNA(Ser). Is also able to aminoacylate tRNA(Sec) with serine, to form the misacylated tRNA L-seryl-tRNA(Sec), which will be further converted into selenocysteinyl-tRNA(Sec). The polypeptide is Serine--tRNA ligase (Campylobacter jejuni (strain RM1221)).